The chain runs to 261 residues: X-box-binding protein 1 (261 aa).

Residues 1 to 185 lie on the Cytoplasmic side of the membrane; that stretch reads MVVVAPAQSP…VQAQLSPLQN (185 aa). Residues 27–37 show a composition bias toward low complexity; that stretch reads TGGAPAGRALP. The interval 27 to 65 is disordered; sequence TGGAPAGRALPVMVPGQQGASPEGASGVPPQARKRQRLT. 2 positions are modified to phosphoserine: Ser-47 and Ser-68. The region spanning 70–133 is the bZIP domain; the sequence is EEKALRRKLK…HGLVVENQEL (64 aa). The basic motif stretch occupies residues 72-94; it reads KALRRKLKNRVAAQTARDRKKAR. The segment at 76–92 is nuclear localization signal (NLS); the sequence is RKLKNRVAAQTARDRKK. A leucine-zipper region spans residues 98–133; that stretch reads LEQQVVDLEEENQKLLLENQLLREKTHGLVVENQEL. A helical; Signal-anchor for type II membrane protein membrane pass occupies residues 186–203; sequence ISPWTLMALTLQTLSLTS. Residues 204–261 are Lumenal-facing; the sequence is CWAFCSTWTQSCSSDVLPQSLPAWSSSQKWTQKDPVPYRPPLLHPWGRHQPSWKPLMN.

It belongs to the bZIP family. Isoform 1 interacts with HM13. Isoform 1 interacts with RNF139; the interaction induces ubiquitination and degradation of isoform 1. Isoform 1 interacts (via luminal domain) with DERL1; the interaction obviates the need for ectodomain shedding prior HM13/SPP-mediated XBP1 isoform 1 cleavage. Isoform 1 interacts with HDAC3 and AKT1; the interactions occur in endothelial cell (EC) under disturbed flow. Isoform 1 interacts with the oncoprotein FOS. Interacts with SIRT1. Post-translationally, isoform 1 is ubiquitinated, leading to proteasome-mediated degradation in response to ER stress. In terms of processing, X-box-binding protein 1, cytoplasmic form and luminal form are produced by intramembrane proteolytic cleavage of ER membrane-anchored isoform 1 triggered by HM13/SPP in a DERL1-RNF139-dependent and VCP/p97-independent manner. X-box-binding protein 1, luminal form is ubiquitinated leading to proteasomal degradation. Acetylated by EP300; acetylation positively regulates the transcriptional activity of XBP1. Deacetylated by SIRT1; deacetylation negatively regulates the transcriptional activity of XBP1.

It is found in the nucleus. It localises to the endoplasmic reticulum. The protein resides in the cytoplasm. The protein localises to the endoplasmic reticulum membrane. Its subcellular location is the membrane. In terms of biological role, functions as a transcription factor during endoplasmic reticulum (ER) stress by regulating the unfolded protein response (UPR). Required for cardiac myogenesis and hepatogenesis during embryonic development, and the development of secretory tissues such as exocrine pancreas and salivary gland. Involved in terminal differentiation of B lymphocytes to plasma cells and production of immunoglobulins. Modulates the cellular response to ER stress in a PIK3R-dependent manner. Binds to the cis-acting X box present in the promoter regions of major histocompatibility complex class II genes. Involved in VEGF-induced endothelial cell (EC) proliferation and retinal blood vessel formation during embryonic development but also for angiogenesis in adult tissues under ischemic conditions. Functions also as a major regulator of the UPR in obesity-induced insulin resistance and type 2 diabetes for the management of obesity and diabetes prevention. Functionally, acts as a weak transcriptional factor. Together with HDAC3, contributes to the activation of NFE2L2-mediated HMOX1 transcription factor gene expression in a PI(3)K/mTORC2/Akt-dependent signaling pathway leading to EC survival under disturbed flow/oxidative stress. Binds to the ER stress response element (ERSE) upon ER stress. Binds to the consensus 5'-GATGACGTG[TG]N(3)[AT]T-3' sequence related to cAMP responsive element (CRE)-like sequences. Associates preferentially to the HDAC3 gene promoter region in a static flow-dependent manner. Binds to the CDH5/VE-cadherin gene promoter region. The polypeptide is X-box-binding protein 1 (Bos taurus (Bovine)).